We begin with the raw amino-acid sequence, 255 residues long: uncharacterized protein (255 aa).

This is an uncharacterized protein from Methanocaldococcus jannaschii (strain ATCC 43067 / DSM 2661 / JAL-1 / JCM 10045 / NBRC 100440) (Methanococcus jannaschii).